The chain runs to 497 residues: Signal recognition particle subunit SRP54 2 (497 aa).

Residues 1–295 (MVLAQLGGSI…DVKPFVSRLL (295 aa)) form a G-domain region. GTP contacts are provided by residues 108 to 115 (GLQGSGKT), 190 to 194 (DTSGR), and 248 to 251 (TKLD). Residues 296–497 (GMGDLSGLMD…MLGGMGLGGD (202 aa)) are M-domain.

Belongs to the GTP-binding SRP family. SRP54 subfamily. Component of a signal recognition particle (SRP) complex that consists of a 7SL RNA molecule of 300 nucleotides and six protein subunits: SRP72, SRP68, SRP54, SRP19, SRP14 and SRP9.

The protein resides in the cytoplasm. The protein localises to the endoplasmic reticulum. The enzyme catalyses GTP + H2O = GDP + phosphate + H(+). Functionally, component of the signal recognition particle (SRP) complex, a ribonucleoprotein complex that mediates the cotranslational targeting of secretory and membrane proteins to the endoplasmic reticulum (ER). As part of the SRP complex, associates with the SRP receptor (SR) component SRPRA to target secretory proteins to the endoplasmic reticulum membrane. Binds to the signal sequence of presecretory proteins when they emerge from the ribosomes. Displays basal GTPase activity, and stimulates reciprocal GTPase activation of the SR subunit SRPRA. Forms a guanosine 5'-triphosphate (GTP)-dependent complex with the SR subunit SRPRA. SR compaction and GTPase mediated rearrangement of SR drive SRP-mediated cotranslational protein translocation into the ER. Requires the presence of SRP9/SRP14 and/or SRP19 to stably interact with RNA. The chain is Signal recognition particle subunit SRP54 2 (SRP54-2) from Hordeum vulgare (Barley).